A 72-amino-acid polypeptide reads, in one-letter code: Translation initiation factor IF-1 1 (72 aa).

In terms of domain architecture, S1-like spans 1–72 (MAKEDRIEMQ…SRARIIFRAK (72 aa)).

Belongs to the IF-1 family. As to quaternary structure, component of the 30S ribosomal translation pre-initiation complex which assembles on the 30S ribosome in the order IF-2 and IF-3, IF-1 and N-formylmethionyl-tRNA(fMet); mRNA recruitment can occur at any time during PIC assembly.

Its subcellular location is the cytoplasm. One of the essential components for the initiation of protein synthesis. Stabilizes the binding of IF-2 and IF-3 on the 30S subunit to which N-formylmethionyl-tRNA(fMet) subsequently binds. Helps modulate mRNA selection, yielding the 30S pre-initiation complex (PIC). Upon addition of the 50S ribosomal subunit IF-1, IF-2 and IF-3 are released leaving the mature 70S translation initiation complex. This chain is Translation initiation factor IF-1 1, found in Methylobacillus flagellatus (strain ATCC 51484 / DSM 6875 / VKM B-1610 / KT).